Here is a 1794-residue protein sequence, read N- to C-terminus: Protein TIC 214 (1794 aa).

The next 6 membrane-spanning stretches (helical) occupy residues 19 to 39 (IINS…FSIG), 68 to 88 (FIAG…HLAL), 91 to 111 (PHTI…WNNH), 133 to 153 (VFLN…SSML), 176 to 196 (VGWL…LVWI), and 227 to 247 (IFSI…PSPI).

It belongs to the TIC214 family. As to quaternary structure, part of the Tic complex.

It is found in the plastid. It localises to the chloroplast inner membrane. In terms of biological role, involved in protein precursor import into chloroplasts. May be part of an intermediate translocation complex acting as a protein-conducting channel at the inner envelope. The protein is Protein TIC 214 of Olimarabidopsis pumila (Dwarf rocket).